A 553-amino-acid polypeptide reads, in one-letter code: Cytokine-like nuclear factor N-PAC (553 aa).

One can recognise a PWWP domain in the interval 8–66 (LGDLVWGKLGRYPPWPGKIVNPPKDLKKPRGKKCFFVKFFGTEDHAWIKVEQLKPYHAH). Composition is skewed to basic and acidic residues over residues 92–145 (RAKG…EGKK) and 162–182 (RAQE…KDLS). The disordered stretch occupies residues 92–190 (RAKGKDQTSS…LSIPESSTVK (99 aa)). A Phosphoserine modification is found at serine 130. Residue lysine 135 forms a Glycyl lysine isopeptide (Lys-Gly) (interchain with G-Cter in SUMO2) linkage. Residue serine 167 is modified to Phosphoserine. Positions 168–180 (PRKRGRPPKDEKD) form a DNA-binding region, a.T hook. Residues lysine 176, lysine 179, lysine 201, and lysine 211 each participate in a glycyl lysine isopeptide (Lys-Gly) (interchain with G-Cter in SUMO2) cross-link. Positions 214–217 (DPHF) are interaction with histone H3. An interaction with KDM1B region spans residues 216 to 225 (HFHHFLLSQT). Glycyl lysine isopeptide (Lys-Gly) (interchain with G-Cter in SUMO2) cross-links involve residues lysine 227, lysine 237, lysine 240, and lysine 269. A dehydrogenase domain region spans residues 261 to 553 (GSVTPTDKKI…MSAVYRAYIH (293 aa)). Residue 271–285 (GFLGLGLMGSGIVSN) participates in NAD(+) binding. Residue lysine 302 forms a Glycyl lysine isopeptide (Lys-Gly) (interchain with G-Cter in SUMO2) linkage. The NAD(+) site is built by threonine 362 and lysine 505. Residue serine 540 is modified to Phosphoserine.

Belongs to the HIBADH-related family. NP60 subfamily. Homotetramere. Interacts with MAPK14. Interacts with KDM1B at nucleosomes; this interaction stimulates H3K4me1 and H3K4me2 demethylation. Binds to mononucleosomes. Interacts with GATA4; the interaction is required for a synergistic activation of GATA4 target genes transcription.

The protein localises to the nucleus. It is found in the chromosome. Its function is as follows. Cytokine-like nuclear factor with chromatin gene reader activity involved in chromatin modification and regulation of gene expression. Acts as a nucleosome-destabilizing factor that is recruited to genes during transcriptional activation. Recognizes and binds histone H3 without a preference for specific epigenetic markers and also binds DNA. Interacts with KDM1B and promotes its histone demethylase activity by facilitating the capture of H3 tails, they form a multifunctional enzyme complex that modifies transcribed chromatin and facilitates Pol II transcription through nucleosomes. Stimulates the acetylation of 'Lys-56' of nucleosomal histone H3 (H3K56ac) by EP300. With GATA4, co-binds a defined set of heart development genes and coregulates their expression during cardiomyocyte differentiation. Regulates p38 MAP kinase activity by mediating stress activation of MAPK14/p38alpha and specifically regulating MAPK14 signaling. Indirectly promotes phosphorylation of MAPK14 and activation of ATF2. The phosphorylation of MAPK14 requires upstream activity of MAP2K4 and MAP2K6. The polypeptide is Cytokine-like nuclear factor N-PAC (GLYR1) (Bos taurus (Bovine)).